A 467-amino-acid chain; its full sequence is Cytochrome c-552 (467 aa).

The signal sequence occupies residues M1–A27. H87 is a heme c binding site. The heme site is built by C115, C118, and K119. The heme c site is built by C153, C156, H157, C195, C198, and H199. Ca(2+)-binding residues include E201, Y202, K250, and Q252. Position 202 (Y202) interacts with substrate. H253 is a substrate binding site. The heme c site is built by H264, C271, C274, H275, H290, C303, C306, H307, and H382.

The protein belongs to the cytochrome c-552 family. The cofactor is Ca(2+). It depends on heme c as a cofactor.

The protein localises to the periplasm. It carries out the reaction 6 Fe(III)-[cytochrome c] + NH4(+) + 2 H2O = 6 Fe(II)-[cytochrome c] + nitrite + 8 H(+). It functions in the pathway nitrogen metabolism; nitrate reduction (assimilation). Its function is as follows. Catalyzes the reduction of nitrite to ammonia, consuming six electrons in the process. The protein is Cytochrome c-552 of Shewanella sp. (strain MR-4).